The chain runs to 362 residues: Class I histocompatibility antigen, Gogo-B*0101 alpha chain (362 aa).

The signal sequence occupies residues 1–24 (MRVTAPRTLLLLLSAALALTETWA). The tract at residues 25–114 (GSHSMRYFDT…ALRYYNQSEA (90 aa)) is alpha-1. At 25-308 (GSHSMRYFDT…EPSSQSTIPI (284 aa)) the chain is on the extracellular side. An N-linked (GlcNAc...) asparagine glycan is attached at asparagine 110. Residues 115–206 (GSHTIQRMFG…ENGRETLQRA (92 aa)) are alpha-2. 2 disulfides stabilise this stretch: cysteine 125/cysteine 188 and cysteine 227/cysteine 283. An alpha-3 region spans residues 207-298 (DTPKTHVTHH…GLPKPLTLRW (92 aa)). The Ig-like C1-type domain occupies 209–295 (PKTHVTHHPI…QHEGLPKPLT (87 aa)). Residues 299–308 (EPSSQSTIPI) form a connecting peptide region. A helical transmembrane segment spans residues 309–332 (VGIVAGLAVLAVVVIGAVVTAVIC). At 333-362 (RRKSSGGKGGSYSQAASSDSAQGSDVSLTA) the chain is on the cytoplasmic side. The tract at residues 335–362 (KSSGGKGGSYSQAASSDSAQGSDVSLTA) is disordered. Residues 343–362 (SYSQAASSDSAQGSDVSLTA) are compositionally biased toward low complexity. Phosphoserine occurs at positions 356 and 359.

It belongs to the MHC class I family. Heterodimer of an alpha chain and a beta chain (beta-2-microglobulin).

It is found in the membrane. Functionally, involved in the presentation of foreign antigens to the immune system. This is Class I histocompatibility antigen, Gogo-B*0101 alpha chain from Gorilla gorilla gorilla (Western lowland gorilla).